Consider the following 874-residue polypeptide: Alanine--tRNA ligase (874 aa).

Residues H564, H568, C665, and H669 each contribute to the Zn(2+) site.

It belongs to the class-II aminoacyl-tRNA synthetase family. It depends on Zn(2+) as a cofactor.

The protein resides in the cytoplasm. It catalyses the reaction tRNA(Ala) + L-alanine + ATP = L-alanyl-tRNA(Ala) + AMP + diphosphate. Catalyzes the attachment of alanine to tRNA(Ala) in a two-step reaction: alanine is first activated by ATP to form Ala-AMP and then transferred to the acceptor end of tRNA(Ala). Also edits incorrectly charged Ser-tRNA(Ala) and Gly-tRNA(Ala) via its editing domain. This chain is Alanine--tRNA ligase, found in Burkholderia vietnamiensis (strain G4 / LMG 22486) (Burkholderia cepacia (strain R1808)).